The following is a 134-amino-acid chain: NADPH-dependent 7-cyano-7-deazaguanine reductase (134 aa).

Cys48 acts as the Thioimide intermediate in catalysis. Asp55 (proton donor) is an active-site residue. Residues 70 to 72 (VEL) and 89 to 90 (QE) contribute to the substrate site.

The protein belongs to the GTP cyclohydrolase I family. QueF type 1 subfamily.

Its subcellular location is the cytoplasm. The enzyme catalyses 7-aminomethyl-7-carbaguanine + 2 NADP(+) = 7-cyano-7-deazaguanine + 2 NADPH + 3 H(+). It participates in tRNA modification; tRNA-queuosine biosynthesis. In terms of biological role, catalyzes the NADPH-dependent reduction of 7-cyano-7-deazaguanine (preQ0) to 7-aminomethyl-7-deazaguanine (preQ1). The chain is NADPH-dependent 7-cyano-7-deazaguanine reductase from Caldanaerobacter subterraneus subsp. tengcongensis (strain DSM 15242 / JCM 11007 / NBRC 100824 / MB4) (Thermoanaerobacter tengcongensis).